The sequence spans 314 residues: Probable dimethyladenosine transferase (314 aa).

Residues His-36, Leu-38, Gly-63, Glu-84, Asp-112, and Asn-127 each contribute to the S-adenosyl-L-methionine site.

It belongs to the class I-like SAM-binding methyltransferase superfamily. rRNA adenine N(6)-methyltransferase family. As to quaternary structure, part of the small subunit (SSU) processome, composed of more than 70 proteins and the RNA chaperone small nucleolar RNA (snoRNA) U3.

The protein localises to the nucleus. It localises to the nucleoplasm. It is found in the nucleolus. The catalysed reaction is adenosine(1779)/adenosine(1780) in 18S rRNA + 4 S-adenosyl-L-methionine = N(6)-dimethyladenosine(1779)/N(6)-dimethyladenosine(1780) in 18S rRNA + 4 S-adenosyl-L-homocysteine + 4 H(+). In terms of biological role, specifically dimethylates two adjacent adenosines in the loop of a conserved hairpin near the 3'-end of 18S rRNA in the 40S particle. Involved in the pre-rRNA processing steps leading to small-subunit rRNA production independently of its RNA-modifying catalytic activity. Part of the small subunit (SSU) processome, first precursor of the small eukaryotic ribosomal subunit. During the assembly of the SSU processome in the nucleolus, many ribosome biogenesis factors, an RNA chaperone and ribosomal proteins associate with the nascent pre-rRNA and work in concert to generate RNA folding, modifications, rearrangements and cleavage as well as targeted degradation of pre-ribosomal RNA by the RNA exosome. This chain is Probable dimethyladenosine transferase (dimt1), found in Dictyostelium discoideum (Social amoeba).